A 147-amino-acid chain; its full sequence is Probable disulfide formation protein (147 aa).

The chain crosses the membrane as a helical span at residues Asn-9–Tyr-28. A disulfide bond links Cys-38 and Cys-41. The next 2 membrane-spanning stretches (helical) occupy residues Tyr-43–Thr-62 and Tyr-69–Leu-86. Cys-99 and Cys-106 are disulfide-bonded. Residues Gly-115 to Phe-138 traverse the membrane as a helical segment.

It belongs to the DsbB family. BdbC subfamily.

It localises to the cell inner membrane. In terms of biological role, required for disulfide bond formation in some proteins. In Coxiella burnetii (strain CbuK_Q154) (Coxiella burnetii (strain Q154)), this protein is Probable disulfide formation protein.